A 460-amino-acid polypeptide reads, in one-letter code: SPbeta prophage-derived uncharacterized protein YopQ (460 aa).

The protein is SPbeta prophage-derived uncharacterized protein YopQ (yopQ) of Bacillus subtilis (strain 168).